The following is a 419-amino-acid chain: Effector protein BipC (419 aa).

2 disordered regions span residues 62–91 (VAGSGAQRVELARPKPDAQTRATDRRTVSG) and 338–402 (LQSG…AKSQ). Composition is skewed to basic and acidic residues over residues 71 to 91 (ELARPKPDAQTRATDRRTVSG) and 380 to 392 (TRDEAAHRSREAA).

Belongs to the SctB/SipC family.

It localises to the secreted. The sequence is that of Effector protein BipC (bipC) from Burkholderia mallei (strain NCTC 10247).